Reading from the N-terminus, the 334-residue chain is MIEADRLIQPQIQAQDESIDRAMRPKMLDEYTGQDDTRAQLKVFIQAAKNRNEALDHMLIYGPPGLGKTTLAMIVANEMGVNIKSTSGPVLEKAGDLAALLTNLESGDVLFIDEIHRLSPVVEEILYPAMEDYQLDIMIGEGPAARSIKLDLPPFTLVGATTRAGALTSPLRARFGIPLRLEFYNIKDLSTIVTRSAQVMELDIDAEGAFEIARRSRGTPRIANRLLRRVRDYAQVKHDGAVTKFVAEHALDLLDVDSEGFDYMDRKLLLAIIDKFMGGPVGLDNLAAAIGEERETIEDVLEPFLIQQGFIQRTPRGRIATARAYQHFELIKPE.

A large ATPase domain (RuvB-L) region spans residues A4–Y184. ATP is bound by residues R24, G65, K68, T69, T70, E131–Y133, R174, Y184, and R221. Mg(2+) is bound at residue T69. Residues N185–D255 are small ATPAse domain (RuvB-S). The segment at S258–E334 is head domain (RuvB-H). Residues R294, R313, and R318 each coordinate DNA.

Belongs to the RuvB family. As to quaternary structure, homohexamer. Forms an RuvA(8)-RuvB(12)-Holliday junction (HJ) complex. HJ DNA is sandwiched between 2 RuvA tetramers; dsDNA enters through RuvA and exits via RuvB. An RuvB hexamer assembles on each DNA strand where it exits the tetramer. Each RuvB hexamer is contacted by two RuvA subunits (via domain III) on 2 adjacent RuvB subunits; this complex drives branch migration. In the full resolvosome a probable DNA-RuvA(4)-RuvB(12)-RuvC(2) complex forms which resolves the HJ.

The protein resides in the cytoplasm. It carries out the reaction ATP + H2O = ADP + phosphate + H(+). The RuvA-RuvB-RuvC complex processes Holliday junction (HJ) DNA during genetic recombination and DNA repair, while the RuvA-RuvB complex plays an important role in the rescue of blocked DNA replication forks via replication fork reversal (RFR). RuvA specifically binds to HJ cruciform DNA, conferring on it an open structure. The RuvB hexamer acts as an ATP-dependent pump, pulling dsDNA into and through the RuvAB complex. RuvB forms 2 homohexamers on either side of HJ DNA bound by 1 or 2 RuvA tetramers; 4 subunits per hexamer contact DNA at a time. Coordinated motions by a converter formed by DNA-disengaged RuvB subunits stimulates ATP hydrolysis and nucleotide exchange. Immobilization of the converter enables RuvB to convert the ATP-contained energy into a lever motion, pulling 2 nucleotides of DNA out of the RuvA tetramer per ATP hydrolyzed, thus driving DNA branch migration. The RuvB motors rotate together with the DNA substrate, which together with the progressing nucleotide cycle form the mechanistic basis for DNA recombination by continuous HJ branch migration. Branch migration allows RuvC to scan DNA until it finds its consensus sequence, where it cleaves and resolves cruciform DNA. The protein is Holliday junction branch migration complex subunit RuvB of Shewanella baltica (strain OS223).